A 485-amino-acid polypeptide reads, in one-letter code: Aspartyl/glutamyl-tRNA(Asn/Gln) amidotransferase subunit B (485 aa).

Belongs to the GatB/GatE family. GatB subfamily. As to quaternary structure, heterotrimer of A, B and C subunits.

It carries out the reaction L-glutamyl-tRNA(Gln) + L-glutamine + ATP + H2O = L-glutaminyl-tRNA(Gln) + L-glutamate + ADP + phosphate + H(+). It catalyses the reaction L-aspartyl-tRNA(Asn) + L-glutamine + ATP + H2O = L-asparaginyl-tRNA(Asn) + L-glutamate + ADP + phosphate + 2 H(+). Its function is as follows. Allows the formation of correctly charged Asn-tRNA(Asn) or Gln-tRNA(Gln) through the transamidation of misacylated Asp-tRNA(Asn) or Glu-tRNA(Gln) in organisms which lack either or both of asparaginyl-tRNA or glutaminyl-tRNA synthetases. The reaction takes place in the presence of glutamine and ATP through an activated phospho-Asp-tRNA(Asn) or phospho-Glu-tRNA(Gln). This Borrelia garinii subsp. bavariensis (strain ATCC BAA-2496 / DSM 23469 / PBi) (Borreliella bavariensis) protein is Aspartyl/glutamyl-tRNA(Asn/Gln) amidotransferase subunit B.